The sequence spans 325 residues: 26S proteasome non-ATPase regulatory subunit 7 (325 aa).

The region spanning 8 to 142 (TIVHPTVLLS…TKSYVTVEEI (135 aa)) is the MPN domain. Residues 285–325 (KKADIINSTPPTTATSPSVADKGKEKEQNAFNGADKPSKQA) are disordered. Positions 292–302 (STPPTTATSPS) are enriched in low complexity.

This sequence belongs to the peptidase M67A family.

Acts as a regulatory subunit of the 26S proteasome which is involved in the ATP-dependent degradation of ubiquitinated proteins. The chain is 26S proteasome non-ATPase regulatory subunit 7 (psmD7) from Dictyostelium discoideum (Social amoeba).